We begin with the raw amino-acid sequence, 129 residues long: Iron-sulfur cluster assembly 1 homolog, mitochondrial (129 aa).

A mitochondrion-targeting transit peptide spans 1 to 12 (MSASIARATVRA). Residues Cys-57, Cys-121, and Cys-123 each contribute to the Fe cation site.

It belongs to the HesB/IscA family.

The protein localises to the mitochondrion. Involved in the maturation of mitochondrial 4Fe-4S proteins functioning late in the iron-sulfur cluster assembly pathway. Probably involved in the binding of an intermediate of Fe/S cluster assembly. This is Iron-sulfur cluster assembly 1 homolog, mitochondrial (isca1) from Danio rerio (Zebrafish).